The primary structure comprises 436 residues: Diaminobutyrate--2-oxoglutarate transaminase (436 aa).

Lys269 is modified (N6-(pyridoxal phosphate)lysine).

It belongs to the class-III pyridoxal-phosphate-dependent aminotransferase family. The cofactor is pyridoxal 5'-phosphate.

The catalysed reaction is L-2,4-diaminobutanoate + 2-oxoglutarate = L-aspartate 4-semialdehyde + L-glutamate. It participates in amine and polyamine biosynthesis; ectoine biosynthesis; L-ectoine from L-aspartate 4-semialdehyde: step 1/3. Catalyzes reversively the conversion of L-aspartate beta-semialdehyde (ASA) to L-2,4-diaminobutyrate (DABA) by transamination with L-glutamate. The chain is Diaminobutyrate--2-oxoglutarate transaminase (ectB) from Nocardia farcinica (strain IFM 10152).